The chain runs to 162 residues: Sec-independent protein translocase protein TatB (162 aa).

Residues 1-21 (MFDLGWTELLVIGVVALIVVG) traverse the membrane as a helical segment. Disordered regions lie at residues 69-111 (ATNP…DRAE) and 124-162 (AADR…ETKA). 2 stretches are compositionally biased toward basic and acidic residues: residues 83–111 (ATRD…DRAE) and 124–141 (AADR…KAEE). Residues 144–155 (AALSATPASTAS) show a composition bias toward low complexity.

It belongs to the TatB family. The Tat system comprises two distinct complexes: a TatABC complex, containing multiple copies of TatA, TatB and TatC subunits, and a separate TatA complex, containing only TatA subunits. Substrates initially bind to the TatABC complex, which probably triggers association of the separate TatA complex to form the active translocon.

Its subcellular location is the cell inner membrane. In terms of biological role, part of the twin-arginine translocation (Tat) system that transports large folded proteins containing a characteristic twin-arginine motif in their signal peptide across membranes. Together with TatC, TatB is part of a receptor directly interacting with Tat signal peptides. TatB may form an oligomeric binding site that transiently accommodates folded Tat precursor proteins before their translocation. The sequence is that of Sec-independent protein translocase protein TatB from Ruegeria sp. (strain TM1040) (Silicibacter sp.).